The chain runs to 469 residues: Sorting and assembly machinery component 50 homolog (469 aa).

One can recognise a POTRA domain in the interval 45 to 125 (VVVQHVHFDG…LDVTFEVTEL (81 aa)). At Lys-255 the chain carries N6-methyllysine.

This sequence belongs to the SAM50/omp85 family. As to quaternary structure, associates with the mitochondrial contact site and cristae organizing system (MICOS) complex, composed of at least MICOS10/MIC10, CHCHD3/MIC19, CHCHD6/MIC25, APOOL/MIC27, IMMT/MIC60, APOO/MIC23/MIC26 and QIL1/MIC13. This complex was also known under the names MINOS or MitOS complex. The MICOS complex associates with mitochondrial outer membrane proteins SAMM50, MTX1 and MTX2 (together described as components of the mitochondrial outer membrane sorting assembly machinery (SAM) complex) and DNAJC11, mitochondrial inner membrane protein TMEM11 and with HSPA9. The MICOS and SAM complexes together with DNAJC11 are part of a large protein complex spanning both membranes termed the mitochondrial intermembrane space bridging (MIB) complex. Interacts with IMMT/MIC60. Interacts with CHCHD3/MIC19. Interacts with ARMC1.

The protein localises to the mitochondrion outer membrane. The protein resides in the cytoplasm. Its subcellular location is the mitochondrion. Functionally, plays a crucial role in the maintenance of the structure of mitochondrial cristae and the proper assembly of the mitochondrial respiratory chain complexes. Required for the assembly of TOMM40 into the TOM complex. The chain is Sorting and assembly machinery component 50 homolog (SAMM50) from Bos taurus (Bovine).